The chain runs to 416 residues: MTDMRRLGQRAKQASLLIAPLSTQIKNRFLSTLAKALVDDTQTLLAANQKDLANAKEHGISDIMMDRLRLTSERIKAMAQGVQQVADLADPIGQVIKGYTNLDGLKILQKRVPLGVIAMIFESRPNVSVDAFSLAFKTNNAIILRGGKDALHSNKALVKLIRQSLEKSGITPDAVQLVEDPSHAVAEELMQATDYVDVLIPRGGAKLIQTVKEKAKVPVIETGVGNVHIYVDAQADLDMATKIVINAKTKRPSVCNAAEGLVIHEAVAARFIPMLEKAINQVQPVEWRADDKALPLFEQAVPAKAEDFETEFLDYIMSVKVVSSLEEAIFWINQHTSHHSEAIITRDIKVAETFQDLVDAAAVYVNASTRFTDGFVFGLGAEIGISTQKMHARGPMGLEALTSTKFYINGDGHIRE.

Belongs to the gamma-glutamyl phosphate reductase family.

It localises to the cytoplasm. It catalyses the reaction L-glutamate 5-semialdehyde + phosphate + NADP(+) = L-glutamyl 5-phosphate + NADPH + H(+). It functions in the pathway amino-acid biosynthesis; L-proline biosynthesis; L-glutamate 5-semialdehyde from L-glutamate: step 2/2. Catalyzes the NADPH-dependent reduction of L-glutamate 5-phosphate into L-glutamate 5-semialdehyde and phosphate. The product spontaneously undergoes cyclization to form 1-pyrroline-5-carboxylate. The protein is Gamma-glutamyl phosphate reductase of Streptococcus pyogenes serotype M49 (strain NZ131).